We begin with the raw amino-acid sequence, 179 residues long: Large ribosomal subunit protein uL5 (179 aa).

This sequence belongs to the universal ribosomal protein uL5 family. As to quaternary structure, part of the 50S ribosomal subunit; part of the 5S rRNA/L5/L18/L25 subcomplex. Contacts the 5S rRNA and the P site tRNA. Forms a bridge to the 30S subunit in the 70S ribosome.

Its function is as follows. This is one of the proteins that bind and probably mediate the attachment of the 5S RNA into the large ribosomal subunit, where it forms part of the central protuberance. In the 70S ribosome it contacts protein S13 of the 30S subunit (bridge B1b), connecting the 2 subunits; this bridge is implicated in subunit movement. Contacts the P site tRNA; the 5S rRNA and some of its associated proteins might help stabilize positioning of ribosome-bound tRNAs. In Clostridium perfringens (strain ATCC 13124 / DSM 756 / JCM 1290 / NCIMB 6125 / NCTC 8237 / Type A), this protein is Large ribosomal subunit protein uL5.